The primary structure comprises 218 residues: Telomere repeats-binding bouquet formation protein 2 (218 aa).

The disordered stretch occupies residues 117–143 (HDRMASSDKENIRPTPEHKQELSKSAE).

This sequence belongs to the TERB2 family. Component of the MAJIN-TERB1-TERB2 complex, composed of MAJIN, TERB1 and TERB2. In terms of tissue distribution, specifically expressed in germline tissues.

The protein localises to the chromosome. The protein resides in the telomere. It is found in the nucleus inner membrane. In terms of biological role, meiosis-specific telomere-associated protein involved in meiotic telomere attachment to the nucleus inner membrane, a crucial step for homologous pairing and synapsis. Component of the MAJIN-TERB1-TERB2 complex, which promotes telomere cap exchange by mediating attachment of telomeric DNA to the inner nuclear membrane and replacement of the protective cap of telomeric chromosomes: in early meiosis, the MAJIN-TERB1-TERB2 complex associates with telomeric DNA and the shelterin/telosome complex. During prophase, the complex matures and promotes release of the shelterin/telosome complex from telomeric DNA. This is Telomere repeats-binding bouquet formation protein 2 from Mus musculus (Mouse).